The sequence spans 355 residues: Protein pelota homolog (355 aa).

It belongs to the eukaryotic release factor 1 family. Pelota subfamily. As to quaternary structure, monomer. The cofactor is a divalent metal cation.

It localises to the cytoplasm. Its function is as follows. May function in recognizing stalled ribosomes, interact with stem-loop structures in stalled mRNA molecules, and effect endonucleolytic cleavage of the mRNA. May play a role in the release non-functional ribosomes and degradation of damaged mRNAs. Has endoribonuclease activity. This is Protein pelota homolog from Halorubrum lacusprofundi (strain ATCC 49239 / DSM 5036 / JCM 8891 / ACAM 34).